Consider the following 177-residue polypeptide: UPF0114 protein HP_0189 (177 aa).

3 helical membrane passes run 15-35 (WLLA…GYVF), 54-74 (LVLS…VLMV), and 145-165 (PIFW…LAAV).

This sequence belongs to the UPF0114 family.

Its subcellular location is the cell membrane. This chain is UPF0114 protein HP_0189, found in Helicobacter pylori (strain ATCC 700392 / 26695) (Campylobacter pylori).